Consider the following 161-residue polypeptide: DNA-binding protein inhibitor ID-4 (161 aa).

One can recognise a bHLH domain in the interval 52 to 104 (AAEAAADEPALCLQCDMNDCYSRLRRLVPTIPPNKKVSKVEILQHVIDYILDL).

Heterodimer with other HLH proteins.

It is found in the nucleus. In terms of biological role, transcriptional regulator (lacking a basic DNA binding domain) which negatively regulates the basic helix-loop-helix (bHLH) transcription factors by forming heterodimers and inhibiting their DNA binding and transcriptional activity. Implicated in regulating a variety of cellular processes, including cellular growth, senescence, differentiation, apoptosis, angiogenesis, and neoplastic transformation. This Mus musculus (Mouse) protein is DNA-binding protein inhibitor ID-4 (Id4).